The sequence spans 359 residues: Alanine racemase, biosynthetic (359 aa).

The active-site Proton acceptor; specific for D-alanine is the K34. N6-(pyridoxal phosphate)lysine is present on K34. Residue R129 participates in substrate binding. The Proton acceptor; specific for L-alanine role is filled by Y255. M303 provides a ligand contact to substrate.

It belongs to the alanine racemase family. Pyridoxal 5'-phosphate is required as a cofactor.

It catalyses the reaction L-alanine = D-alanine. It functions in the pathway amino-acid biosynthesis; D-alanine biosynthesis; D-alanine from L-alanine: step 1/1. The protein operates within cell wall biogenesis; peptidoglycan biosynthesis. In terms of biological role, catalyzes the interconversion of L-alanine and D-alanine. Provides the D-alanine required for cell wall biosynthesis. This is Alanine racemase, biosynthetic (alr) from Escherichia coli O157:H7.